The chain runs to 400 residues: Enoyl-[acyl-carrier-protein] reductase [NADH] 2 (400 aa).

Residues 48–53 (GASSGF), 75–76 (FE), 112–113 (DA), and 141–142 (LA) contribute to the NAD(+) site. Y228 lines the substrate pocket. The active-site Proton donor is Y238. Residues K247 and 276-278 (LVT) contribute to the NAD(+) site.

This sequence belongs to the TER reductase family. In terms of assembly, monomer.

The enzyme catalyses a 2,3-saturated acyl-[ACP] + NAD(+) = a (2E)-enoyl-[ACP] + NADH + H(+). The protein operates within lipid metabolism; fatty acid biosynthesis. Involved in the final reduction of the elongation cycle of fatty acid synthesis (FAS II). Catalyzes the reduction of a carbon-carbon double bond in an enoyl moiety that is covalently linked to an acyl carrier protein (ACP). The sequence is that of Enoyl-[acyl-carrier-protein] reductase [NADH] 2 from Vibrio vulnificus (strain CMCP6).